Reading from the N-terminus, the 222-residue chain is GTP cyclohydrolase 1 (222 aa).

Zn(2+) contacts are provided by Cys111, His114, and Cys182.

This sequence belongs to the GTP cyclohydrolase I family. Toroid-shaped homodecamer, composed of two pentamers of five dimers.

The enzyme catalyses GTP + H2O = 7,8-dihydroneopterin 3'-triphosphate + formate + H(+). It participates in cofactor biosynthesis; 7,8-dihydroneopterin triphosphate biosynthesis; 7,8-dihydroneopterin triphosphate from GTP: step 1/1. The sequence is that of GTP cyclohydrolase 1 from Klebsiella pneumoniae subsp. pneumoniae (strain ATCC 700721 / MGH 78578).